The sequence spans 355 residues: UPF0421 protein BCE_2776 (355 aa).

The next 4 helical transmembrane spans lie at 19–39 (IAVF…IFAV), 74–94 (FTFF…FTIV), 109–129 (TLTA…AFLI), and 131–151 (LATT…ILPP).

Belongs to the UPF0421 family.

The protein localises to the cell membrane. The protein is UPF0421 protein BCE_2776 of Bacillus cereus (strain ATCC 10987 / NRS 248).